The sequence spans 150 residues: Large ribosomal subunit protein bL9 (150 aa).

It belongs to the bacterial ribosomal protein bL9 family.

Functionally, binds to the 23S rRNA. The chain is Large ribosomal subunit protein bL9 from Leptothrix cholodnii (strain ATCC 51168 / LMG 8142 / SP-6) (Leptothrix discophora (strain SP-6)).